Consider the following 247-residue polypeptide: ATP synthase subunit a, chloroplastic (247 aa).

5 helical membrane-spanning segments follow: residues 38 to 58 (QVLI…VIAV), 95 to 115 (VPFI…GALL), 134 to 154 (INTT…AGLS), 199 to 219 (LVVV…VMFL), and 220 to 240 (GLFT…AYIG).

Belongs to the ATPase A chain family. F-type ATPases have 2 components, CF(1) - the catalytic core - and CF(0) - the membrane proton channel. CF(1) has five subunits: alpha(3), beta(3), gamma(1), delta(1), epsilon(1). CF(0) has four main subunits: a, b, b' and c.

Its subcellular location is the plastid. It localises to the chloroplast thylakoid membrane. Its function is as follows. Key component of the proton channel; it plays a direct role in the translocation of protons across the membrane. In Agrostis stolonifera (Creeping bentgrass), this protein is ATP synthase subunit a, chloroplastic.